Consider the following 408-residue polypeptide: Arginine biosynthesis bifunctional protein ArgJ (408 aa).

Residues Thr158, Lys184, Thr195, Glu281, Asn403, and Thr408 each coordinate substrate. Residue Thr195 is the Nucleophile of the active site.

The protein belongs to the ArgJ family. In terms of assembly, heterotetramer of two alpha and two beta chains.

The protein localises to the cytoplasm. The catalysed reaction is N(2)-acetyl-L-ornithine + L-glutamate = N-acetyl-L-glutamate + L-ornithine. It carries out the reaction L-glutamate + acetyl-CoA = N-acetyl-L-glutamate + CoA + H(+). The protein operates within amino-acid biosynthesis; L-arginine biosynthesis; L-ornithine and N-acetyl-L-glutamate from L-glutamate and N(2)-acetyl-L-ornithine (cyclic): step 1/1. Its pathway is amino-acid biosynthesis; L-arginine biosynthesis; N(2)-acetyl-L-ornithine from L-glutamate: step 1/4. Functionally, catalyzes two activities which are involved in the cyclic version of arginine biosynthesis: the synthesis of N-acetylglutamate from glutamate and acetyl-CoA as the acetyl donor, and of ornithine by transacetylation between N(2)-acetylornithine and glutamate. This Shouchella clausii (strain KSM-K16) (Alkalihalobacillus clausii) protein is Arginine biosynthesis bifunctional protein ArgJ.